A 214-amino-acid polypeptide reads, in one-letter code: Pyridoxine/pyridoxamine 5'-phosphate oxidase (214 aa).

Substrate-binding positions include 10-13 (RLNY) and Lys-68. Residues 63–68 (RMVLLK), 78–79 (YT), Lys-85, and Gln-107 each bind FMN. The substrate site is built by Tyr-125, Arg-129, and Ser-133. Residues 142 to 143 (QS) and Trp-187 each bind FMN. Residue 193–195 (RLH) participates in substrate binding. Arg-197 contacts FMN.

It belongs to the pyridoxamine 5'-phosphate oxidase family. Homodimer. It depends on FMN as a cofactor.

It catalyses the reaction pyridoxamine 5'-phosphate + O2 + H2O = pyridoxal 5'-phosphate + H2O2 + NH4(+). It carries out the reaction pyridoxine 5'-phosphate + O2 = pyridoxal 5'-phosphate + H2O2. The protein operates within cofactor metabolism; pyridoxal 5'-phosphate salvage; pyridoxal 5'-phosphate from pyridoxamine 5'-phosphate: step 1/1. Its pathway is cofactor metabolism; pyridoxal 5'-phosphate salvage; pyridoxal 5'-phosphate from pyridoxine 5'-phosphate: step 1/1. Catalyzes the oxidation of either pyridoxine 5'-phosphate (PNP) or pyridoxamine 5'-phosphate (PMP) into pyridoxal 5'-phosphate (PLP). The chain is Pyridoxine/pyridoxamine 5'-phosphate oxidase from Synechocystis sp. (strain ATCC 27184 / PCC 6803 / Kazusa).